A 354-amino-acid chain; its full sequence is AT-rich binding protein (354 aa).

The segment at 31-54 adopts a C2H2-type 1 zinc-finger fold; sequence IVCHTCQEELQTQDKFWKHIQDEH. Disordered stretches follow at residues 84–124 and 256–276; these read LPLY…HDDQ and EVQQ…SSAM. Composition is skewed to basic and acidic residues over residues 89–100 and 109–124; these read KVSENDQQRDDV and QKEP…HDDQ. Residues 264–276 are compositionally biased toward low complexity; the sequence is TNNSTTASASSAM. 2 consecutive C2H2-type zinc fingers follow at residues 285-309 and 315-338; these read YICD…RSVH and FACE…KKKH.

As to quaternary structure, homooctamer. As to expression, fat body.

It localises to the nucleus. Functionally, may be a transcription factor for genes having (A+T) stretches in their promoter and/or enhancer regions. Binds to AT rich DNA. This is AT-rich binding protein from Sarcophaga peregrina (Flesh fly).